A 205-amino-acid polypeptide reads, in one-letter code: MEFFWASLLGLCCSLAAANRHTVFWNSSNPKFWNEDYTVHVRIDDYLDIICPHYEDNSVPDAAMEQYTLYLVEHEQYQLCQPQPKDHARWFCKSPKAKHGPEKLSEKFHRFTGFTLSKDFKEGHSYYYISKPIHHQEDRCLRLKVMIAGKITHSPQAHPNAQEKRLPADDPEVQVLHSIGHSAAPRLFPLAWAVLLLPFLLLQIP.

A signal peptide spans Met-1 to Ala-18. The 133-residue stretch at Asn-19–Ile-151 folds into the Ephrin RBD domain. Residue Asn-26 is glycosylated (N-linked (GlcNAc...) asparagine). 2 cysteine pairs are disulfide-bonded: Cys-51-Cys-92 and Cys-80-Cys-140. Ser-182 carries GPI-anchor amidated serine lipidation. Residues Ala-183–Pro-205 constitute a propeptide, removed in mature form.

The protein belongs to the ephrin family. Monomer. Homodimer. Forms heterodimers with EPHA2. Binds to the receptor tyrosine kinases EPHA2, EPHA3, EPHA4, EPHA5, EPHA6 and EPHA7. Also binds with low affinity to EPHA1. In terms of processing, undergoes proteolysis by a metalloprotease to give rise to a soluble monomeric form. N-Glycosylation is required for binding to EPHA2 receptor and inducing its internalization.

The protein resides in the cell membrane. Its subcellular location is the secreted. Cell surface GPI-bound ligand for Eph receptors, a family of receptor tyrosine kinases which are crucial for migration, repulsion and adhesion during neuronal, vascular and epithelial development. Binds promiscuously Eph receptors residing on adjacent cells, leading to contact-dependent bidirectional signaling into neighboring cells. Plays an important role in angiogenesis and tumor neovascularization. The recruitment of VAV2, VAV3 and PI3-kinase p85 subunit by phosphorylated EPHA2 is critical for EFNA1-induced RAC1 GTPase activation and vascular endothelial cell migration and assembly. Exerts anti-oncogenic effects in tumor cells through activation and down-regulation of EPHA2. Activates EPHA2 by inducing tyrosine phosphorylation which leads to its internalization and degradation. Acts as a negative regulator in the tumorigenesis of gliomas by down-regulating EPHA2 and FAK. Can evoke collapse of embryonic neuronal growth cone and regulates dendritic spine morphogenesis. The polypeptide is Ephrin-A1 (EFNA1) (Bos taurus (Bovine)).